Consider the following 223-residue polypeptide: Ribonuclease T (223 aa).

In terms of domain architecture, Exonuclease spans 20-194; the sequence is VVIDVETAGF…YDTERTAELF (175 aa). Residues D23, E25, H181, and D186 each coordinate Mg(2+). H181 (proton donor/acceptor) is an active-site residue.

The protein belongs to the RNase T family. As to quaternary structure, homodimer. The cofactor is Mg(2+).

Trims short 3' overhangs of a variety of RNA species, leaving a one or two nucleotide 3' overhang. Responsible for the end-turnover of tRNA: specifically removes the terminal AMP residue from uncharged tRNA (tRNA-C-C-A). Also appears to be involved in tRNA biosynthesis. The sequence is that of Ribonuclease T from Shewanella baltica (strain OS155 / ATCC BAA-1091).